The primary structure comprises 211 residues: Large ribosomal subunit protein uL3 (211 aa).

Residues 116–142 are disordered; it reads GTSGVMKKHGFSGNRASHGVSRNHRLG.

Belongs to the universal ribosomal protein uL3 family. Part of the 50S ribosomal subunit. Forms a cluster with proteins L14 and L19.

One of the primary rRNA binding proteins, it binds directly near the 3'-end of the 23S rRNA, where it nucleates assembly of the 50S subunit. This is Large ribosomal subunit protein uL3 from Fusobacterium nucleatum subsp. nucleatum (strain ATCC 25586 / DSM 15643 / BCRC 10681 / CIP 101130 / JCM 8532 / KCTC 2640 / LMG 13131 / VPI 4355).